The sequence spans 501 residues: MEALLQLKGIDKAFPGVKALSGAALNVYPGRVIALVGENGAGKSTMMKVLTGIYTRDAGTLLWLGKETTFTGPKSSQEAGIGIIHQELNLIPQLTIAENIFLGREFVNRFGKIDWKTMYAEADKLLAKLNLCFKSDKLVGDLSIGDQQMVEIAKVLSFESKVIIMDEPTDALTDTETESLFRVIRELKSQGRGIVYISHRMKEIFEICDDVTVFRDGQFIAEREVASLTEDSLIEMMVGRKLEDQYPHLDKAPGDIRLKVDNLCGPGVNDVSFTLRKGEILGVSGLMGAGRTELMKVLYGAQPRTSGYVTLDGHEVVTRSPQDGLANGIVYISEDRKRDGLVLGMSVKENMSLTALRYFSRAGGSLKHADEQQAVSDFIRLFNVKTPSMEQAIGLLSGGNQQKVAIARGLMTRPKVLILDEPTRGVDVGAKKEIYQLINQFKADGLSIILVSSEMPEVLGMSDRIIVMHEGHLSGEFTREQATQEVLMAAAVGKLNRVNQE.

2 ABC transporter domains span residues 5–241 (LQLK…VGRK) and 252–495 (APGD…VGKL). Position 37-44 (37-44 (GENGAGKS)) interacts with ATP.

Belongs to the ABC transporter superfamily. Ribose importer (TC 3.A.1.2.1) family. In terms of assembly, the complex is composed of an ATP-binding protein (RbsA), two transmembrane proteins (RbsC) and a solute-binding protein (RbsB).

The protein resides in the cell inner membrane. The enzyme catalyses D-ribose(out) + ATP + H2O = D-ribose(in) + ADP + phosphate + H(+). Part of the ABC transporter complex RbsABC involved in ribose import. Responsible for energy coupling to the transport system. In Shigella sonnei (strain Ss046), this protein is Ribose import ATP-binding protein RbsA.